The chain runs to 230 residues: 7-cyano-7-deazaguanine synthase (230 aa).

Residue 8 to 18 (LSGGMDSAVVT) coordinates ATP. Zn(2+) is bound by residues Cys-186, Cys-196, Cys-199, and Cys-202.

Belongs to the QueC family. Zn(2+) is required as a cofactor.

It catalyses the reaction 7-carboxy-7-deazaguanine + NH4(+) + ATP = 7-cyano-7-deazaguanine + ADP + phosphate + H2O + H(+). It functions in the pathway purine metabolism; 7-cyano-7-deazaguanine biosynthesis. Functionally, catalyzes the ATP-dependent conversion of 7-carboxy-7-deazaguanine (CDG) to 7-cyano-7-deazaguanine (preQ(0)). The polypeptide is 7-cyano-7-deazaguanine synthase (Xylella fastidiosa (strain 9a5c)).